The following is a 144-amino-acid chain: Succinate dehydrogenase cytochrome b560 subunit (144 aa).

Transmembrane regions (helical) follow at residues 40-60, 84-104, and 124-144; these read IFHR…ILIL, GFLF…HLFA, and LTGY…WIIF. His101 is a binding site for heme.

The protein belongs to the cytochrome b560 family. In terms of assembly, forms part of complex II containing four subunits: a 70 kDa flavoprotein (FP), a 27 kDa iron-sulfur protein (IP), a cytochrome B and a membrane-anchoring protein. Requires heme as cofactor.

It localises to the mitochondrion inner membrane. The protein operates within carbohydrate metabolism; tricarboxylic acid cycle. In terms of biological role, membrane-anchoring subunit of succinate dehydrogenase (SDH) that is involved in complex II of the mitochondrial electron transport chain and is responsible for transferring electrons from succinate to ubiquinone (coenzyme Q). This chain is Succinate dehydrogenase cytochrome b560 subunit (SDH3), found in Reclinomonas americana.